A 499-amino-acid chain; its full sequence is MATVIPGDLSEVRDTQKAPSGKRKRGESKPRKNFPCQLCDKAFNSVEKLKVHSFSHTGERPYKCTHQDCTKAFVSKYKLQRHMATHSPEKTHKCNYCEKMFHRKDHLKNHLHTHDPNKETFKCEECGKSYNTKLGFKRHLALHAATSGDLTCKVCLQTFESTGVLLEHLKSHAGKSSGGVKEKKHQCEHCERRFYTRKDVRRHMVVHTGRKDFLCQYCAQRFGRKDHLTRHMKKSHNQELLKVKTEPVDFLDPFTCNMSVPIKDELLPVMSLPSSELLSKPFTNTLQLNLYNTPFQSMQSSGSTHQMITTLPLGMTCPIDMDTVHPSHHLAFKCPFSSTSYAISIPEKEQPLKGEIESYLMELQGGAPSSSQDSQASSSKLGLEPQSGSPDDGAGDLSLSKSSISISDPLNTPALDFSQLFNFIPLNGPPYNPLSVGSLGMSYSQDEAHSSVSQLPTQTQDLQDPANTVGLGSLHSLSAAFTSSLSSSTTLPRFHQAFQ.

The disordered stretch occupies residues 1 to 33; sequence MATVIPGDLSEVRDTQKAPSGKRKRGESKPRKN. The segment at 2-84 is interaction with KPNA2; sequence ATVIPGDLSE…SKYKLQRHMA (83 aa). The Nuclear localization signal motif lies at 22–25; it reads KRKR. C2H2-type zinc fingers lie at residues 34–56, 62–86, 92–114, 121–143, 150–172, 185–207, and 213–236; these read FPCQ…SFSH, YKCT…MATH, HKCN…LHTH, FKCE…LALH, LTCK…LKSH, HQCE…MVVH, and FLCQ…KKSH. The interval 41–242 is decreased nuclear import with localization in the nucleus but also in the cytoplasm; sequence KAFNSVEKLK…KKSHNQELLK (202 aa). Residues 243–383 are repression domain; contains 3 sumoylation motifs and massively decrease transcription activity; that stretch reads VKTEPVDFLD…SQASSSKLGL (141 aa). The tract at residues 243-499 is activates transcription; Inhibition of nuclear import due to lack of NLS and KPNA2 interaction; the sequence is VKTEPVDFLD…TLPRFHQAFQ (257 aa). Glycyl lysine isopeptide (Lys-Gly) (interchain with G-Cter in SUMO) cross-links involve residues K244 and K263. Residues 364 to 400 are disordered; that stretch reads QGGAPSSSQDSQASSSKLGLEPQSGSPDDGAGDLSLS. Residues 369-379 are compositionally biased toward low complexity; that stretch reads SSSQDSQASSS. Residues 384-499 are massively activates transcription; the sequence is EPQSGSPDDG…TLPRFHQAFQ (116 aa).

This sequence belongs to the krueppel C2H2-type zinc-finger protein family. As to quaternary structure, interacts with KPNA2, which escorts protein to the nucleus via interaction with nuclear localization signal. Interacts with E3 SUMO-protein ligase PIAS1, PIAS2 and PIAS4. Sumoylated with SUMO1; which inhibits transcriptional activity, but does not affect nuclear localization. Blockers of sumoylation pathway such as SENP3 and inactive UBE2I increases transcriptional capacity. Sumoylation is increased in the presence of PIAS1. Post-translationally, acetylated by lysine acetyltransferase EP300; which activates transcriptional capacity. Lysine residues that are sumoylated also seem to be target for acetylation. As to expression, expressed in heart, spleen, lung, kidney, brain, testis and epididymis but not in salivary glands.

The protein resides in the nucleus. Its function is as follows. Transcription factor whose activation results in up-regulation of target genes, such as IGFII, leading to uncontrolled cell proliferation: when overexpressed in cultured cells, higher proliferation rate and transformation are observed. Other target genes such as CRLF1, CRABP2, CRIP2, PIGF are strongly induced in cells with PLAG1 induction. Proto-oncogene whose ectopic expression can trigger the development of pleomorphic adenomas of the salivary gland and lipoblastomas. Cooperates with CBFB-MYH11. In Rattus norvegicus (Rat), this protein is Zinc finger protein PLAG1 (Plag1).